The following is a 145-amino-acid chain: uncharacterized protein (145 aa).

Positions 1–49 (MLSIFKNLLGTSEEDGTTQEANSKDTKGLKEERKRKKRKNKYKIPPGHT) are disordered. Residues 22 to 32 (NSKDTKGLKEE) show a composition bias toward basic and acidic residues. Residues 33–42 (RKRKKRKNKY) show a composition bias toward basic residues. Residue Ser68 is modified to Phosphoserine. One can recognise a Cytochrome b5 heme-binding domain in the interval 69–145 (PISVTAEELA…LKTSFVGYLV (77 aa)). 2 residues coordinate heme: His104 and His127.

Belongs to the cytochrome b5 family.

The protein resides in the cytoplasm. This is an uncharacterized protein from Schizosaccharomyces pombe (strain 972 / ATCC 24843) (Fission yeast).